A 286-amino-acid polypeptide reads, in one-letter code: Acetylglutamate kinase (286 aa).

Residues 69 to 70, Arg91, and Asn185 contribute to the substrate site; that span reads GG.

Belongs to the acetylglutamate kinase family. ArgB subfamily.

It is found in the cytoplasm. It carries out the reaction N-acetyl-L-glutamate + ATP = N-acetyl-L-glutamyl 5-phosphate + ADP. It participates in amino-acid biosynthesis; L-arginine biosynthesis; N(2)-acetyl-L-ornithine from L-glutamate: step 2/4. In terms of biological role, catalyzes the ATP-dependent phosphorylation of N-acetyl-L-glutamate. This chain is Acetylglutamate kinase, found in Chlorobium chlorochromatii (strain CaD3).